The sequence spans 300 residues: Protoheme IX farnesyltransferase 1 (300 aa).

The next 8 helical transmembrane spans lie at 26–46 (VVVLMLITSLVGMFLATRAGV), 48–68 (WTVLVFGNLGIALCAGGAAAV), 97–117 (AALAFALLLALAGQALLLTFT), 120–140 (LTAWLTLASLLGYAVVYTGFL), 148–168 (IVIGGLAGAAPPLLGWVAATG), 174–194 (PLLLVLIIFAWTPPHFWALAI), 226–246 (FALLAVSLLPYVIHMSGVLYL), and 280–300 (IYYLFLLFIALLVDHYLLLNL).

This sequence belongs to the UbiA prenyltransferase family. Protoheme IX farnesyltransferase subfamily.

Its subcellular location is the cell inner membrane. The catalysed reaction is heme b + (2E,6E)-farnesyl diphosphate + H2O = Fe(II)-heme o + diphosphate. It functions in the pathway porphyrin-containing compound metabolism; heme O biosynthesis; heme O from protoheme: step 1/1. Its function is as follows. Converts heme B (protoheme IX) to heme O by substitution of the vinyl group on carbon 2 of heme B porphyrin ring with a hydroxyethyl farnesyl side group. The sequence is that of Protoheme IX farnesyltransferase 1 from Pseudomonas fluorescens (strain ATCC BAA-477 / NRRL B-23932 / Pf-5).